The chain runs to 339 residues: Transcription initiation factor IIB (339 aa).

The TFIIB-type zinc-finger motif lies at 39–70 (EELICPVCGSKNIIKDYERAEIVCEMCGCVLQ). Residues Cys-43, Cys-46, Cys-62, and Cys-65 each contribute to the Zn(2+) site. Repeat copies occupy residues 156 to 239 (SELD…SREL) and 250 to 331 (DYVP…ELTE).

Belongs to the TFIIB family.

Functionally, stabilizes TBP binding to an archaeal box-A promoter. Also responsible for recruiting RNA polymerase II to the pre-initiation complex (DNA-TBP-TFIIB). In Methanococcus maripaludis (strain C7 / ATCC BAA-1331), this protein is Transcription initiation factor IIB.